A 128-amino-acid chain; its full sequence is Ribonuclease P protein component (128 aa).

It belongs to the RnpA family. As to quaternary structure, consists of a catalytic RNA component (M1 or rnpB) and a protein subunit.

The catalysed reaction is Endonucleolytic cleavage of RNA, removing 5'-extranucleotides from tRNA precursor.. Functionally, RNaseP catalyzes the removal of the 5'-leader sequence from pre-tRNA to produce the mature 5'-terminus. It can also cleave other RNA substrates such as 4.5S RNA. The protein component plays an auxiliary but essential role in vivo by binding to the 5'-leader sequence and broadening the substrate specificity of the ribozyme. The sequence is that of Ribonuclease P protein component from Rhizobium meliloti (strain 1021) (Ensifer meliloti).